The following is a 177-amino-acid chain: Protein BROTHER of FT and TFL 1 (177 aa).

Belongs to the phosphatidylethanolamine-binding protein family.

It is found in the cytoplasm. Functionally, may form complexes with phosphorylated ligands by interfering with kinases and their effectors. This Arabidopsis thaliana (Mouse-ear cress) protein is Protein BROTHER of FT and TFL 1 (BFT).